A 216-amino-acid polypeptide reads, in one-letter code: Thiopurine S-methyltransferase (216 aa).

Positions 10, 45, 66, and 123 each coordinate S-adenosyl-L-methionine.

This sequence belongs to the class I-like SAM-binding methyltransferase superfamily. TPMT family.

It is found in the cytoplasm. The catalysed reaction is S-adenosyl-L-methionine + a thiopurine = S-adenosyl-L-homocysteine + a thiopurine S-methylether.. The chain is Thiopurine S-methyltransferase from Pseudomonas putida (strain GB-1).